The primary structure comprises 215 residues: Peroxiredoxin-5, mitochondrial (215 aa).

A mitochondrion-targeting transit peptide spans 1-53 (MGLAGVCVLRRSAGYILGGAAGQSVAATAAARRRSEGGWASGGVRSFSRAAAA). One can recognise a Thioredoxin domain in the interval 57–215 (IKVGDAIPAV…SLAPSIISQL (159 aa)). Residue Lys-76 is modified to N6-acetyllysine. At Lys-84 the chain carries N6-acetyllysine; alternate. N6-succinyllysine; alternate is present on Lys-84. The active-site Cysteine sulfenic acid (-SOH) intermediate is the Cys-101. A lipid anchor (S-palmitoyl cysteine) is attached at Cys-101. Cys-101 and Cys-205 are oxidised to a cystine. Lys-117 carries the post-translational modification N6-succinyllysine. A phosphoserine mark is found at Ser-172 and Ser-183. The Microbody targeting signal signature appears at 213 to 215 (SQL).

This sequence belongs to the peroxiredoxin family. Prx5 subfamily. In terms of assembly, monomer. Post-translationally, S-palmitoylated. Palmitoylation occurs on the active site, inhibiting its reactivity; therefore PRDX5 palmitoylation status determines its antioxidant capacity. In terms of processing, S-palmitoylated. Depalmitoylated by ABHD10.

It localises to the mitochondrion. It is found in the cytoplasm. The protein resides in the peroxisome matrix. It catalyses the reaction a hydroperoxide + [thioredoxin]-dithiol = an alcohol + [thioredoxin]-disulfide + H2O. Its function is as follows. Thiol-specific peroxidase that catalyzes the reduction of hydrogen peroxide and organic hydroperoxides to water and alcohols, respectively. Plays a role in cell protection against oxidative stress by detoxifying peroxides and as sensor of hydrogen peroxide-mediated signaling events. This is Peroxiredoxin-5, mitochondrial (PRDX5) from Papio hamadryas (Hamadryas baboon).